Reading from the N-terminus, the 569-residue chain is Linoleate hydratase (569 aa).

Tyr87 is a binding site for FAD. Tyr205 (proton donor) is an active-site residue. Residues Val254, Ser300, and Thr524 each coordinate FAD.

It belongs to the oleate hydratase family. Requires FAD as cofactor.

It is found in the cell membrane. The protein resides in the cytoplasm. It catalyses the reaction (9Z,12Z)-octadecadienoate + H2O = (10S)-hydroxy-(12Z)-octadecenoate. The enzyme catalyses (10E,12Z)-octadecadienoate + H2O = (10S)-hydroxy-(12Z)-octadecenoate. The catalysed reaction is (9Z)-octadecenoate + H2O = 10-hydroxyoctadecanoate. It carries out the reaction (10E)-octadecenoate + H2O = 10-hydroxyoctadecanoate. It catalyses the reaction (9E,11E)-octadecadienoate + H2O = 10-hydroxy-(11E)-octadecenoate. The enzyme catalyses (9Z,11E)-octadecadienoate + H2O = 10-hydroxy-(11E)-octadecenoate. The catalysed reaction is (9Z)-hexadecenoate + H2O = 10-hydroxyhexadecanoate. It carries out the reaction (9Z,12Z,15Z)-octadecatrienoate + H2O = (10S)-hydroxy-(12Z,15Z)-octadecadienoate. It catalyses the reaction (6Z,9Z,12Z)-octadecatrienoate + H2O = (10S)-hydroxy-(6Z,12Z)-octadecadienoate. The enzyme catalyses (6Z,9Z,12Z,15Z)-octadecatetraenoate + H2O = (10S)-hydroxy-(6Z,12Z,15Z)-octadecatrienoate. It participates in lipid metabolism; fatty acid metabolism. The addition of NADH or NADPH highly increases catalytic activity, likely by reducing the cofactor FAD to FADH2. The hydration and dehydration reactions are strongly inhibited by Ag(+), Fe(2+), Cu(2+), Zn(2+), Hg(2+), and Fe(3+). In terms of biological role, is involved in a saturation metabolic pathway of polyunsaturated fatty acids, that detoxifies unsaturated fatty acids and generates hydroxy fatty acids, oxo fatty acids, conjugated fatty acids such as conjugated linoleic acids (CLAs), and partially saturated trans-fatty acids as intermediates. CLA-HY catalyzes the hydration and dehydration steps in the production of 10-hydroxy-cis-12-octadecenoate, trans-10,cis-12-CLA, cis-9,trans-11-CLA, trans-9,trans-11-CLA, oleate and trans-10-octadecenoate during linoleate metabolism. Is also able to hydrate palmitoleic acid (cis-9-hexadecenoic acid), oleic acid, alpha-linolenic acid, gamma-linolenic acid, and stearidonic acid into the corresponding 10-hydroxy fatty acids, and dehydrate 10-hydroxy-cis-12,cis-15-octadecadienoic acid, 10-hydroxy-cis-6,cis-12-octadecadienoic acid, and 10-hydroxyoctadecanoic acid into the corresponding fatty acids with cis double bonds at the Delta9 position. As part of the gut microbiome, this enzyme modifies host fatty acid composition and is expected to improve human health by altering lipid metabolism related to the onset of metabolic syndrome. Shows regioselectivity for Delta9 double bond hydration, generating C10 hydroxy groups in the (S)-configuration with high enantioselectivity, when another double bond is in position 12. Is not able to hydrate fatty acids with a trans carbon-carbon double bond at Delta9 position (elaidic acid, trans-9-octadecenoic acid), fatty acid esters (methyl linoleate, monolinolein, dilinolein, and trilinolein), and conjugated fatty acids (conjugated linoleic acids), as well as fatty acids with other chain lengths, such as myristoleic acid (cis-9-tetradecenoic acid), arachidonic acid (cis-5,cis-8,cis-11,cis-14-eicosatetraenoic acid), EPA (cis-5,cis-8,cis-11,cis-14,cis-17-eicosapentaenoic acid), DHA (cis-4,cis-7,cis-10,cis-13,cis-16,cis-19-docosahexaenoic acid) and fatty acids with a cis carbon-carbon double bond at Delta11 position, such as cis-vaccenic acid and cis-11-octadecenoic acid, or fatty alcohols, such as linoleyl alcohol. Is not able to dehydrate 12-hydroxy, 3-hydroxy, and 9-hydroxy fatty acids. This is Linoleate hydratase from Lactiplantibacillus plantarum (Lactobacillus plantarum).